Consider the following 122-residue polypeptide: uncharacterized protein (122 aa).

The segment covering Met-1 to Arg-15 has biased composition (basic and acidic residues). Residues Met-1 to Ser-49 form a disordered region. The span at Leu-16–Pro-32 shows a compositional bias: low complexity.

This is an uncharacterized protein from Homo sapiens (Human).